The following is a 553-amino-acid chain: ATP synthase F(1) complex subunit alpha, mitochondrial (553 aa).

Residues 1–43 (MLSVRVAAAVARALPRRAGLVSKNALGSSFVGARNLHASNTRL) constitute a mitochondrion transit peptide. 2 positions are modified to phosphoserine: serine 53 and serine 65. Serine 76 is modified (phosphoserine; alternate). Serine 76 carries O-linked (GlcNAc) serine; alternate glycosylation. Position 106 is a phosphoserine (serine 106). Residues lysine 123, lysine 126, and lysine 132 each carry the N6-acetyllysine modification. Threonine 134 is modified (phosphothreonine). Position 161 is an N6-acetyllysine; alternate (lysine 161). At lysine 161 the chain carries N6-succinyllysine; alternate. The residue at position 166 (serine 166) is a Phosphoserine. Position 167 is an N6-acetyllysine; alternate (lysine 167). An N6-succinyllysine; alternate modification is found at lysine 167. Serine 184 carries the phosphoserine modification. Position 204 is an omega-N-methylarginine (arginine 204). Residues glutamine 215, glycine 217, lysine 218, threonine 219, and serine 220 each contribute to the ATP site. Mg(2+) is bound at residue threonine 219. Residues lysine 230 and lysine 239 each carry the N6-acetyllysine; alternate modification. Lysine 230 and lysine 239 each carry N6-succinyllysine; alternate. Lysine 240 bears the N6-acetyllysine mark. Residues lysine 261 and lysine 305 each carry the N6-acetyllysine; alternate modification. An N6-succinyllysine; alternate mark is found at lysine 261 and lysine 305. Residue aspartate 312 participates in Mg(2+) binding. Lysine 427 is modified (N6-acetyllysine; alternate). Lysine 427 is subject to N6-succinyllysine; alternate. Residue lysine 434 is modified to N6-acetyllysine. Glutamine 473 and glutamine 475 together coordinate ATP. N6-acetyllysine; alternate occurs at positions 498 and 506. Lysine 498 and lysine 506 each carry N6-succinyllysine; alternate. Serine 521 carries the post-translational modification Phosphoserine. An N6-acetyllysine; alternate mark is found at lysine 531 and lysine 539. An N6-succinyllysine; alternate mark is found at lysine 531 and lysine 539. Lysine 541 carries the N6-acetyllysine modification.

It belongs to the ATPase alpha/beta chains family. Homotrimer. Component of the ATP synthase complex composed at least of ATP5F1A/subunit alpha, ATP5F1B/subunit beta, ATP5MC1/subunit c (homooctomer), MT-ATP6/subunit a, MT-ATP8/subunit 8, ATP5ME/subunit e, ATP5MF/subunit f, ATP5MG/subunit g, ATP5MK/subunit k, ATP5MJ/subunit j, ATP5F1C/subunit gamma, ATP5F1D/subunit delta, ATP5F1E/subunit epsilon, ATP5PF/subunit F6, ATP5PB/subunit b, ATP5PD/subunit d, ATP5PO/subunit OSCP. ATP synthase complex consists of a soluble F(1) head domain (subunits alpha(3) and beta(3)) - the catalytic core - and a membrane F(0) domain - the membrane proton channel (subunits c, a, 8, e, f, g, k and j). These two domains are linked by a central stalk (subunits gamma, delta, and epsilon) rotating inside the F1 region and a stationary peripheral stalk (subunits F6, b, d, and OSCP). Interacts with ATPAF2. Interacts with HRG; the interaction occurs on the surface of T-cells and alters the cell morphology when associated with concanavalin (in vitro). Interacts with PLG (angiostatin peptide); the interaction inhibits most of the angiogenic properties of angiostatin. Interacts with BLOC1S1. Interacts with BCL2L1 isoform BCL-X(L); the interaction mediates the association of BCL2L1 isoform BCL-X(L) with the mitochondrial membrane F(1)F(0) ATP synthase and enhances neurons metabolic efficiency. Interacts with CLN5 and PPT1. Interacts with S100A1; this interaction increases F1-ATPase activity. Interacts with ABCB7; this interaction allows the regulation of cellular iron homeostasis and cellular reactive oxygen species (ROS) levels in cardiomyocytes. Post-translationally, acetylated on lysine residues. BLOC1S1 is required for acetylation. Acetylation of Lys-132, Lys-230 and Lys-498 is observed in liver mitochondria from fasted mice but not from fed mice.

The protein localises to the mitochondrion inner membrane. Its subcellular location is the cell membrane. Its function is as follows. Subunit alpha, of the mitochondrial membrane ATP synthase complex (F(1)F(0) ATP synthase or Complex V) that produces ATP from ADP in the presence of a proton gradient across the membrane which is generated by electron transport complexes of the respiratory chain. ATP synthase complex consist of a soluble F(1) head domain - the catalytic core - and a membrane F(1) domain - the membrane proton channel. These two domains are linked by a central stalk rotating inside the F(1) region and a stationary peripheral stalk. During catalysis, ATP synthesis in the catalytic domain of F(1) is coupled via a rotary mechanism of the central stalk subunits to proton translocation. In vivo, can only synthesize ATP although its ATP hydrolase activity can be activated artificially in vitro. With the catalytic subunit beta (ATP5F1B), forms the catalytic core in the F(1) domain. Subunit alpha does not bear the catalytic high-affinity ATP-binding sites. This chain is ATP synthase F(1) complex subunit alpha, mitochondrial, found in Mus musculus (Mouse).